We begin with the raw amino-acid sequence, 175 residues long: UPF0398 protein SSA_1858 (175 aa).

This sequence belongs to the UPF0398 family.

This chain is UPF0398 protein SSA_1858, found in Streptococcus sanguinis (strain SK36).